Here is a 781-residue protein sequence, read N- to C-terminus: Transcription factor Sp3 (781 aa).

Residues 1–12 (MTAPEKPVKQEE) are compositionally biased toward basic and acidic residues. Disordered stretches follow at residues 1-53 (MTAP…AAQD) and 65-88 (TCSK…AGAP). Residues 20–31 (SGGGGGGGGGHG) show a composition bias toward gly residues. The segment covering 32-53 (EYLQQQQQHGNGAVAAAAAAQD) has biased composition (low complexity). Position 73 is a phosphoserine (S73). K120 participates in a covalent cross-link: Glycyl lysine isopeptide (Lys-Gly) (interchain with G-Cter in SUMO). Residues 138-237 (QYVLPLQNLQ…IPQTGQVQVQ (100 aa)) form a transactivation domain (Gln-rich) region. A disordered region spans residues 301-338 (QAMDSSDNSERTGERVSPDINETNTDTDLFVPTSSSSQ). Residues 308-317 (NSERTGERVS) are compositionally biased toward basic and acidic residues. A compositionally biased stretch (polar residues) spans 320–338 (INETNTDTDLFVPTSSSSQ). The interval 350–499 (QQNTNSLTTS…TPVQTLTLGQ (150 aa)) is transactivation domain (Gln-rich). Residues 461 to 469 (VTWQTFQVQ) carry the 9aaTAD motif. The tract at residues 534–620 (IQLHPGENAD…RGTNLGKKKQ (87 aa)) is repressor domain. K551 is subject to N6-acetyllysine; alternate. Residue K551 forms a Glycyl lysine isopeptide (Lys-Gly) (interchain with G-Cter in SUMO); alternate linkage. A Glycyl lysine isopeptide (Lys-Gly) (interchain with G-Cter in SUMO1); alternate cross-link involves residue K551. Residue K551 forms a Glycyl lysine isopeptide (Lys-Gly) (interchain with G-Cter in SUMO2); alternate linkage. Phosphoserine is present on residues S563 and S566. K593 is covalently cross-linked (Glycyl lysine isopeptide (Lys-Gly) (interchain with G-Cter in SUMO2)). Residues 621 to 645 (HICHIPGCGKVYGKTSHLRAHLRWH) form a C2H2-type 1 zinc finger. S646 bears the Phosphoserine mark. 2 consecutive C2H2-type zinc fingers follow at residues 651-675 (FVCN…RRTH) and 681-703 (FVCP…IKTH).

Belongs to the Sp1 C2H2-type zinc-finger protein family. As to quaternary structure, interacts with HLTF; the interaction may be required for basal transcriptional activity of HLTF. Interacts with HDAC1; the interaction deacetylates SP3 and regulates its transcriptional activity. Interacts with HDAC2 (preferably the CK2-phosphorylated form); the interaction deacetylates SP3 and regulates its transcriptional activity. Interacts with MEIS2 isoform 4 and PBX1 isoform PBX1a. Post-translationally, not glycosylated. In terms of processing, acetylated by histone acetyltransferase p300, deacetylated by HDACs. Acetylation/deacetylation states regulate transcriptional activity. Acetylation appears to activate transcription. Alternate sumoylation and acetylation at Lys-551 also control transcriptional activity. Ceramides can also regulate acetylation/deacetylation events through altering the interaction of HDAC with SP3. In vitro, C(18)-ceramides, but not C(16)-ceramides, increase the interaction of HDAC1 with SP3 and enhance the deacetylation of SP3 and the subsequent repression of the TERT promoter. Sumoylated on all isoforms. Sumoylated on 2 sites in longer isoforms with Lys-551 being the major site. Sumoylation at this site promotes nuclear localization to the nuclear periphery, nuclear dots and PML nuclear bodies. Sumoylation on Lys-551 represses the transactivation activity, except for the largest isoform, L-Sp3, which has little effect on transactivation. Alternate sumoylation and acetylation at Lys-551 also control transcriptional activity. Ubiquitously expressed.

The protein localises to the nucleus. It localises to the PML body. Its function is as follows. Transcriptional factor that can act as an activator or repressor depending on isoform and/or post-translational modifications. Binds to GT and GC boxes promoter elements. Competes with SP1 for the GC-box promoters. Weak activator of transcription but can activate a number of genes involved in different processes such as cell-cycle regulation, hormone-induction and house-keeping. The sequence is that of Transcription factor Sp3 (SP3) from Homo sapiens (Human).